We begin with the raw amino-acid sequence, 90 residues long: MSSENMDITENIQNEQNKDFDDIDFERRRRLLTLQISKSMNEVVNLMSALNKNLESINGVGKEFENVASLWKEFQNSVLQKKDREMLDAP.

The protein belongs to the DASH complex DAD1 family. As to quaternary structure, component of the DASH complex consisting of ask1, dad1, dad2, dad3, dad4, dam1, duo1, dad5, spc19 and spc34, with a stoichiometry of one copy of each subunit per complex. Multiple DASH complexes oligomerize to form a ring that encircles spindle microtubules and organizes the rod-like NDC80 complexes of the outer kinetochore. DASH complex oligomerization strengthens microtubule attachments. On cytoplasmic microtubules, DASH complexes appear to form patches instead of rings. Interacts with sim4.

The protein resides in the nucleus. Its subcellular location is the cytoplasm. The protein localises to the cytoskeleton. It localises to the spindle. It is found in the chromosome. The protein resides in the centromere. Its subcellular location is the kinetochore. In terms of biological role, component of the DASH complex that connects microtubules with kinetochores and couples microtubule depolymerisation to chromosome movement; it is involved in retrieving kinetochores to the spindle poles before their re-orientation on the spindle in early mitosis and allows microtubule depolymerization to pull chromosomes apart and resist detachment during anaphase. Kinetochores, consisting of a centromere-associated inner segment and a microtubule-contacting outer segment, play a crucial role in chromosome segregation by mediating the physical connection between centromeric DNA and microtubules. Kinetochores also serve as an input point for the spindle assembly checkpoint, which delays anaphase until all chromosomes have bioriented on the mitotic spindle. The DASH complex mediates bipolar kinetochore-microtubule attachments and facilitates the formation of additional interactions between outer kinetochore components and spindle microtubules. During chromosome movement along the microtubule, it is required both for the sliding of kinetochores along the lateral side of the microtubule and also for microtubule end-on pulling on the kinetochore. Modulates cytoplasmic microtubule dynamics by tracking the plus-end of shortening microtubules and slowing their depolymerization. As a constitutive component of the kinetochore, mediates interaction between the DASH and sim4 complexes leading to loading of DASH onto the kinetochore. This is DASH complex subunit dad1 (dad1) from Schizosaccharomyces pombe (strain 972 / ATCC 24843) (Fission yeast).